We begin with the raw amino-acid sequence, 396 residues long: Elongation factor Tu (396 aa).

Positions 10 to 206 constitute a tr-type G domain; it reads KPHVNIGTIG…AVDSYIPDPE (197 aa). A G1 region spans residues 19–26; the sequence is GHVDHGKT. A GTP-binding site is contributed by 19 to 26; the sequence is GHVDHGKT. Residue T26 participates in Mg(2+) binding. The tract at residues 60–64 is G2; the sequence is GITIA. A G3 region spans residues 81–84; that stretch reads DCPG. Residues 81 to 85 and 136 to 139 contribute to the GTP site; these read DCPGH and NKAD. The G4 stretch occupies residues 136–139; that stretch reads NKAD. Residues 174–176 are G5; the sequence is SAL.

Belongs to the TRAFAC class translation factor GTPase superfamily. Classic translation factor GTPase family. EF-Tu/EF-1A subfamily. In terms of assembly, monomer.

Its subcellular location is the cytoplasm. It catalyses the reaction GTP + H2O = GDP + phosphate + H(+). In terms of biological role, GTP hydrolase that promotes the GTP-dependent binding of aminoacyl-tRNA to the A-site of ribosomes during protein biosynthesis. This chain is Elongation factor Tu, found in Pelobacter propionicus (strain DSM 2379 / NBRC 103807 / OttBd1).